The chain runs to 260 residues: MGRPRPRAAKTWMFLLLLGGAWAGHSRAQEDKVLGGHECQPHSQPWQAALFQGQQLLCGGVLVGGNWVLTAAHCKKPKYTVRLGDHSLQNKDGPEQEIPVVQSIPHPCYNSSDVEDHNHDLMLLQLRDQASLGSKVKPISLADHCTQPGQKCTVSGWGTVTSPRENFPDTLNCAEVKIFPQKKCEDAYPGQITDGMVCAGSSKGADTCQGDSGGPLVCDGALQGITSWGSDPCGRSDKPGVYTNICRYLDWIKKIIGSKG.

The first 28 residues, 1–28, serve as a signal peptide directing secretion; that stretch reads MGRPRPRAAKTWMFLLLLGGAWAGHSRA. Residues 29–32 constitute a propeptide that is removed on maturation; sequence QEDK. The Peptidase S1 domain maps to 33–257; it reads VLGGHECQPH…YLDWIKKIIG (225 aa). 6 disulfides stabilise this stretch: Cys39–Cys173, Cys58–Cys74, Cys145–Cys246, Cys152–Cys218, Cys184–Cys198, and Cys208–Cys233. His73 (charge relay system) is an active-site residue. N-linked (GlcNAc...) asparagine glycosylation is present at Asn110. Asp120 functions as the Charge relay system in the catalytic mechanism. Catalysis depends on Ser212, which acts as the Charge relay system.

This sequence belongs to the peptidase S1 family. Kallikrein subfamily. In terms of assembly, interacts with SPINK9. As to expression, isoform 1 is predominantly expressed in the pancreas. Isoform 2 is expressed in adult brain and hippocampus. Isoform 1 and isoform 2 are found in fetal brain and placenta. Detected in salivary gland, uterus, thymus, breast, testis and kidney but not in spleen, liver, lung or normal ovarian tissue. Displays an 11.5-fold increase in Alzheimer disease hippocampus compared to controls and is overexpressed in some ovarian carcinomas. Expressed at low levels in normal skin while high levels are found in psoriasis vulgaris, seborrheic keratosis, lichen planus and squamous cell carcinoma skin samples. Expressed in the keratinocytes.

The protein resides in the secreted. The protein localises to the cytoplasm. The enzyme catalyses Cleavage of amide substrates following the basic amino acids Arg or Lys at the P1 position, with a preference for Arg over Lys.. With respect to regulation, inhibited by a range of serine protease inhibitors including antipain, aprotinin, leupeptin, benzamidine and soybean trypsin inhibitor. Its function is as follows. Serine protease which is capable of degrading a number of proteins such as casein, fibrinogen, kininogen, fibronectin and collagen type IV. Also cleaves L1CAM in response to increased neural activity. Induces neurite outgrowth and fasciculation of cultured hippocampal neurons. Plays a role in the formation and maturation of orphan and small synaptic boutons in the Schaffer-collateral pathway, regulates Schaffer-collateral long-term potentiation in the hippocampus and is required for memory acquisition and synaptic plasticity. Involved in skin desquamation and keratinocyte proliferation. Plays a role in the secondary phase of pathogenesis following spinal cord injury. This Homo sapiens (Human) protein is Kallikrein-8 (KLK8).